Consider the following 753-residue polypeptide: 5-methyltetrahydropteroyltriglutamate--homocysteine methyltransferase (753 aa).

5-methyltetrahydropteroyltri-L-glutamate is bound by residues 17 to 20 (RELK) and Lys117. Residues 431–433 (IGS) and Glu484 contribute to the L-homocysteine site. Residues 431–433 (IGS) and Glu484 contribute to the L-methionine site. Residues 515–516 (RC) and Trp561 each bind 5-methyltetrahydropteroyltri-L-glutamate. Asp599 provides a ligand contact to L-homocysteine. Asp599 contributes to the L-methionine binding site. Glu605 provides a ligand contact to 5-methyltetrahydropteroyltri-L-glutamate. Zn(2+) is bound by residues His641, Cys643, and Glu665. Catalysis depends on His694, which acts as the Proton donor. A Zn(2+)-binding site is contributed by Cys726.

The protein belongs to the vitamin-B12 independent methionine synthase family. It depends on Zn(2+) as a cofactor.

It catalyses the reaction 5-methyltetrahydropteroyltri-L-glutamate + L-homocysteine = tetrahydropteroyltri-L-glutamate + L-methionine. It functions in the pathway amino-acid biosynthesis; L-methionine biosynthesis via de novo pathway; L-methionine from L-homocysteine (MetE route): step 1/1. Catalyzes the transfer of a methyl group from 5-methyltetrahydrofolate to homocysteine resulting in methionine formation. The sequence is that of 5-methyltetrahydropteroyltriglutamate--homocysteine methyltransferase from Cronobacter sakazakii (strain ATCC BAA-894) (Enterobacter sakazakii).